Here is a 414-residue protein sequence, read N- to C-terminus: MSHQLFRNTRIYSPMDSGQPSAGKAQGKLAHFPNGALLVADGLIVAMGDEEAVLAVAKGGAEVEEVDCGGRCMIPGFVDPHTHMCFAAPREAEFAQRIAGTSYLQILSEGGGILSSVRAVALAGEDELYKSTLHRVQTALSFGTTSLEIKSGYGLDTDNELKMLRVIGRVAVDSCLDIVATFLGAHAIPGQYKTDADAFITMIVEEMLPRVREQGIARFCDVFCERGVFSIEQSRILLKAARAMGLGLKIHADEVTDLGGAGLAAELGACSADHLLAASDTNIRAMSQAGVIATLLPATAYSLRKDYARARVMIENRVAVALATDCNPGSSFTESMQFVIGLAVLNMEMTPAEALTGASLNSAYALNMADRVGSLDRGKQADFLLLEGETPAVLAYHAGVSSVASVYKRGEKVH.

A compositionally biased stretch (polar residues) spans 1 to 20; the sequence is MSHQLFRNTRIYSPMDSGQP. The segment at 1-26 is disordered; sequence MSHQLFRNTRIYSPMDSGQPSAGKAQ. Residues His81 and His83 each coordinate Fe(3+). His81 and His83 together coordinate Zn(2+). Arg90, Tyr153, and His186 together coordinate 4-imidazolone-5-propanoate. Tyr153 is an N-formimidoyl-L-glutamate binding site. His251 provides a ligand contact to Fe(3+). His251 is a binding site for Zn(2+). Glu254 provides a ligand contact to 4-imidazolone-5-propanoate. Asp325 contacts Fe(3+). A Zn(2+)-binding site is contributed by Asp325. N-formimidoyl-L-glutamate contacts are provided by Asn327 and Gly329. Residue Ser330 coordinates 4-imidazolone-5-propanoate.

The protein belongs to the metallo-dependent hydrolases superfamily. HutI family. It depends on Zn(2+) as a cofactor. Requires Fe(3+) as cofactor.

The protein localises to the cytoplasm. The enzyme catalyses 4-imidazolone-5-propanoate + H2O = N-formimidoyl-L-glutamate. It participates in amino-acid degradation; L-histidine degradation into L-glutamate; N-formimidoyl-L-glutamate from L-histidine: step 3/3. Catalyzes the hydrolytic cleavage of the carbon-nitrogen bond in imidazolone-5-propanoate to yield N-formimidoyl-L-glutamate. It is the third step in the universal histidine degradation pathway. This chain is Imidazolonepropionase, found in Desulfotalea psychrophila (strain LSv54 / DSM 12343).